The primary structure comprises 124 residues: Small ribosomal subunit protein bS6 (124 aa).

Belongs to the bacterial ribosomal protein bS6 family.

In terms of biological role, binds together with bS18 to 16S ribosomal RNA. In Campylobacter lari (strain RM2100 / D67 / ATCC BAA-1060), this protein is Small ribosomal subunit protein bS6.